Consider the following 305-residue polypeptide: UDP-3-O-acyl-N-acetylglucosamine deacetylase (305 aa).

Positions 78, 237, and 241 each coordinate Zn(2+). The active-site Proton donor is H264.

It belongs to the LpxC family. It depends on Zn(2+) as a cofactor.

It carries out the reaction a UDP-3-O-[(3R)-3-hydroxyacyl]-N-acetyl-alpha-D-glucosamine + H2O = a UDP-3-O-[(3R)-3-hydroxyacyl]-alpha-D-glucosamine + acetate. The protein operates within glycolipid biosynthesis; lipid IV(A) biosynthesis; lipid IV(A) from (3R)-3-hydroxytetradecanoyl-[acyl-carrier-protein] and UDP-N-acetyl-alpha-D-glucosamine: step 2/6. In terms of biological role, catalyzes the hydrolysis of UDP-3-O-myristoyl-N-acetylglucosamine to form UDP-3-O-myristoylglucosamine and acetate, the committed step in lipid A biosynthesis. In Burkholderia cenocepacia (strain ATCC BAA-245 / DSM 16553 / LMG 16656 / NCTC 13227 / J2315 / CF5610) (Burkholderia cepacia (strain J2315)), this protein is UDP-3-O-acyl-N-acetylglucosamine deacetylase.